The sequence spans 631 residues: Chaperone protein HtpG (631 aa).

An a; substrate-binding region spans residues 1–339; the sequence is MSAQKETLGF…SNDLPLNVSR (339 aa). The interval 340-556 is b; the sequence is EILQESKDID…EHDMSAHLER (217 aa). The interval 557–631 is c; it reads MLKAAGQKIE…INKLMLELSV (75 aa).

It belongs to the heat shock protein 90 family. Homodimer.

It is found in the cytoplasm. Functionally, molecular chaperone. Has ATPase activity. The sequence is that of Chaperone protein HtpG from Chromobacterium violaceum (strain ATCC 12472 / DSM 30191 / JCM 1249 / CCUG 213 / NBRC 12614 / NCIMB 9131 / NCTC 9757 / MK).